The primary structure comprises 428 residues: tRNA(Ile)-lysidine synthase (428 aa).

An ATP-binding site is contributed by 28–33; the sequence is SGGVDS.

It belongs to the tRNA(Ile)-lysidine synthase family.

The protein localises to the cytoplasm. It catalyses the reaction cytidine(34) in tRNA(Ile2) + L-lysine + ATP = lysidine(34) in tRNA(Ile2) + AMP + diphosphate + H(+). Its function is as follows. Ligates lysine onto the cytidine present at position 34 of the AUA codon-specific tRNA(Ile) that contains the anticodon CAU, in an ATP-dependent manner. Cytidine is converted to lysidine, thus changing the amino acid specificity of the tRNA from methionine to isoleucine. The protein is tRNA(Ile)-lysidine synthase of Streptococcus pyogenes serotype M1.